The chain runs to 431 residues: Serine--tRNA ligase (431 aa).

Position 235 to 237 (235 to 237) interacts with L-serine; sequence TAE. ATP is bound by residues 266 to 268 and valine 282; that span reads RRE. Glutamate 289 provides a ligand contact to L-serine. 353-356 is a binding site for ATP; that stretch reads EASS. Residue serine 389 coordinates L-serine.

The protein belongs to the class-II aminoacyl-tRNA synthetase family. Type-1 seryl-tRNA synthetase subfamily. As to quaternary structure, homodimer. The tRNA molecule binds across the dimer.

The protein localises to the cytoplasm. It carries out the reaction tRNA(Ser) + L-serine + ATP = L-seryl-tRNA(Ser) + AMP + diphosphate + H(+). The enzyme catalyses tRNA(Sec) + L-serine + ATP = L-seryl-tRNA(Sec) + AMP + diphosphate + H(+). Its pathway is aminoacyl-tRNA biosynthesis; selenocysteinyl-tRNA(Sec) biosynthesis; L-seryl-tRNA(Sec) from L-serine and tRNA(Sec): step 1/1. Functionally, catalyzes the attachment of serine to tRNA(Ser). Is also able to aminoacylate tRNA(Sec) with serine, to form the misacylated tRNA L-seryl-tRNA(Sec), which will be further converted into selenocysteinyl-tRNA(Sec). In Pelodictyon phaeoclathratiforme (strain DSM 5477 / BU-1), this protein is Serine--tRNA ligase.